The following is a 238-amino-acid chain: Probable amino-acid ABC transporter permease protein y4tF (238 aa).

The region spanning 29 to 223 (AWVTIQFTLY…GIALVLSFFM (195 aa)) is the ABC transmembrane type-1 domain. 5 consecutive transmembrane segments (helical) span residues 33–53 (IQFT…FGIG), 77–97 (LLVQ…MMGI), 103–123 (PVVA…AEIV), 152–172 (VALP…AIAA), and 203–223 (TVYT…SFFM).

The protein belongs to the binding-protein-dependent transport system permease family. HisMQ subfamily.

It localises to the cell inner membrane. Its function is as follows. Probably part of the binding-protein-dependent transport system y4tEFGH for an amino acid. Probably responsible for the translocation of the substrate across the membrane. The protein is Probable amino-acid ABC transporter permease protein y4tF of Sinorhizobium fredii (strain NBRC 101917 / NGR234).